The chain runs to 812 residues: MTEKSHKKTAKGRAGSPSPTSARNKKADNGARGNKVSERLKAVKELQKTETKKARPEHVVNLIGDALWLMGLAATLYLVISLISFDMGDPSWSHSSPVVEDVANWGGLFGAYVADVGYYLFGWSFWWWIAAACVMLYKNFRLHAKQTENEAYNHKIAAAALFVLTVFSPVLEYFVLGGKYADSLPVGAGGMVGIRVGAVFAWLLGKSGSLLIILVVLLLSLSLLVQISWLEFLNGAGRAVQNRLSALSGKVMALGKRRPNTKTDGVDTQNTRRMVKEAKNITAKPVALPEGSSSNRKSVAVSVAPPPKIQVSLFEDDEPRQAGEYHKPTLNLLRIPDSEPVSINPAELERTAELIESKLAEFGIGVQVVSATSGPVITRYEIEPAQGVKGSQIVALSKDLARSMSLQSVRIVETIAGKNTMGIELPNDKRQDVMLSEILSSPVFAEAKSKLTVALGKDIAGTPVVGDLAKMPHLLVAGMTGSGKSVGVNGMIMSMLFKATPDEVRFIMIDPKMLELSIYDGIPHLLCPVVTDMREAGQALNWCVAEMEKRYRLLSHAGVRNLEGFNQKVEAAKAAGKPLLNPFSLNPDNPEPLEKLPMIVVVIDELADLMMTERKAVEQQIARLAQKARAAGIHMIVATQRPSVDVVTGLIKANIPTRMAFTVQSKIDSRTILDQMGADELLKYGDSLFLQPGSAEPTRLQGAFVSDDEVHHVVAFVKEQAPANYVEGLLTGEAAQETANIVSPNADSDELFDQAVAYVLESKKTSISSLQRQLRIGYNRAANLMEALENAGVVSPSDLNGSRKILAHKDHL.

Positions 1–11 are enriched in basic residues; the sequence is MTEKSHKKTAK. Residues 1–36 are disordered; sequence MTEKSHKKTAKGRAGSPSPTSARNKKADNGARGNKV. The segment covering 25–36 has biased composition (basic and acidic residues); the sequence is KKADNGARGNKV. 5 helical membrane passes run 63 to 83, 116 to 136, 156 to 176, 184 to 204, and 210 to 230; these read IGDA…ISLI, VGYY…CVML, IAAA…YFVL, LPVG…AWLL, and LLII…ISWL. The Cytoplasmic segment spans residues 231 to 812; it reads EFLNGAGRAV…RKILAHKDHL (582 aa). The 210-residue stretch at 461–670 folds into the FtsK domain; that stretch reads GTPVVGDLAK…FTVQSKIDSR (210 aa). 481–486 serves as a coordination point for ATP; it reads GSGKSV.

Belongs to the FtsK/SpoIIIE/SftA family. In terms of assembly, homohexamer. Forms a ring that surrounds DNA.

The protein resides in the cell inner membrane. In terms of biological role, essential cell division protein that coordinates cell division and chromosome segregation. The N-terminus is involved in assembly of the cell-division machinery. The C-terminus functions as a DNA motor that moves dsDNA in an ATP-dependent manner towards the dif recombination site, which is located within the replication terminus region. Translocation stops specifically at Xer-dif sites, where FtsK interacts with the Xer recombinase, allowing activation of chromosome unlinking by recombination. FtsK orienting polar sequences (KOPS) guide the direction of DNA translocation. FtsK can remove proteins from DNA as it translocates, but translocation stops specifically at XerCD-dif site, thereby preventing removal of XerC and XerD from dif. This is DNA translocase FtsK 1 (ftsK1) from Neisseria meningitidis serogroup A / serotype 4A (strain DSM 15465 / Z2491).